We begin with the raw amino-acid sequence, 280 residues long: MGGIVFNYIDPVAFNLGPLSVRWYGIIIAVGILLGYFVAQRALVKAGLHKDTLVDIIFYSALFGFIAARIYFVIFQWPYYAENPGEIIKIWHGGIAIHGGLIGGFIAGVIVCKVKNLNPFQIGDIVAPSIILAQGIGRWGNFMNHEAHGGPVSRAFLEQLHLPNFIIENMYINGQYYHPTFLYESIWDVAGFIILVNIRKHLKLGETFFLYLTWYSIGRFFIEGLRTDSLMLTSNIRVAQLVSILLILISISLIVYRRIKYNPPLYSKVGALPWPTRKVK.

The next 3 membrane-spanning stretches (helical) occupy residues 19 to 39, 56 to 76, and 90 to 110; these read LSVRWYGIIIAVGILLGYFVA, IIFYSALFGFIAARIYFVIFQ, and IWHGGIAIHGGLIGGFIAGVI. Arginine 138 provides a ligand contact to a 1,2-diacyl-sn-glycero-3-phospho-(1'-sn-glycerol). Helical transmembrane passes span 204-224 and 236-256; these read LGETFFLYLTWYSIGRFFIEG and IRVAQLVSILLILISISLIVY.

It belongs to the Lgt family.

It is found in the cell membrane. It catalyses the reaction L-cysteinyl-[prolipoprotein] + a 1,2-diacyl-sn-glycero-3-phospho-(1'-sn-glycerol) = an S-1,2-diacyl-sn-glyceryl-L-cysteinyl-[prolipoprotein] + sn-glycerol 1-phosphate + H(+). It functions in the pathway protein modification; lipoprotein biosynthesis (diacylglyceryl transfer). Functionally, catalyzes the transfer of the diacylglyceryl group from phosphatidylglycerol to the sulfhydryl group of the N-terminal cysteine of a prolipoprotein, the first step in the formation of mature lipoproteins. The protein is Phosphatidylglycerol--prolipoprotein diacylglyceryl transferase of Staphylococcus aureus (strain MRSA252).